The chain runs to 971 residues: Valine--tRNA ligase (971 aa).

The 'HIGH' region signature appears at Pro-55–His-65. The 'KMSKS' region signature appears at Lys-572–Ser-576. Lys-575 serves as a coordination point for ATP. A coiled-coil region spans residues Lys-906–Glu-933.

The protein belongs to the class-I aminoacyl-tRNA synthetase family. ValS type 1 subfamily. As to quaternary structure, monomer.

Its subcellular location is the cytoplasm. It catalyses the reaction tRNA(Val) + L-valine + ATP = L-valyl-tRNA(Val) + AMP + diphosphate. Its function is as follows. Catalyzes the attachment of valine to tRNA(Val). As ValRS can inadvertently accommodate and process structurally similar amino acids such as threonine, to avoid such errors, it has a 'posttransfer' editing activity that hydrolyzes mischarged Thr-tRNA(Val) in a tRNA-dependent manner. This chain is Valine--tRNA ligase, found in Acinetobacter baylyi (strain ATCC 33305 / BD413 / ADP1).